The chain runs to 2294 residues: Protein Ycf2 (2294 aa).

An ATP-binding site is contributed by 1635–1642; the sequence is GSIGTGRS.

This sequence belongs to the Ycf2 family.

The protein localises to the plastid. The protein resides in the chloroplast stroma. In terms of biological role, probable ATPase of unknown function. Its presence in a non-photosynthetic plant (Epifagus virginiana) and experiments in tobacco indicate that it has an essential function which is probably not related to photosynthesis. This Ranunculus macranthus (Large buttercup) protein is Protein Ycf2.